The primary structure comprises 157 residues: 2-C-methyl-D-erythritol 2,4-cyclodiphosphate synthase (157 aa).

Residues Asp-8 and His-10 each contribute to the a divalent metal cation site. Residues 8–10 (DVH) and 34–35 (HS) each bind 4-CDP-2-C-methyl-D-erythritol 2-phosphate. An a divalent metal cation-binding site is contributed by His-42. 4-CDP-2-C-methyl-D-erythritol 2-phosphate-binding positions include 56–58 (DIG), 61–65 (FPDTD), 100–106 (AQAPKMA), 132–135 (TTTE), Phe-139, and Arg-142.

It belongs to the IspF family. Homotrimer. A divalent metal cation is required as a cofactor.

The catalysed reaction is 4-CDP-2-C-methyl-D-erythritol 2-phosphate = 2-C-methyl-D-erythritol 2,4-cyclic diphosphate + CMP. Its pathway is isoprenoid biosynthesis; isopentenyl diphosphate biosynthesis via DXP pathway; isopentenyl diphosphate from 1-deoxy-D-xylulose 5-phosphate: step 4/6. Functionally, involved in the biosynthesis of isopentenyl diphosphate (IPP) and dimethylallyl diphosphate (DMAPP), two major building blocks of isoprenoid compounds. Catalyzes the conversion of 4-diphosphocytidyl-2-C-methyl-D-erythritol 2-phosphate (CDP-ME2P) to 2-C-methyl-D-erythritol 2,4-cyclodiphosphate (ME-CPP) with a corresponding release of cytidine 5-monophosphate (CMP). This chain is 2-C-methyl-D-erythritol 2,4-cyclodiphosphate synthase, found in Stutzerimonas stutzeri (strain A1501) (Pseudomonas stutzeri).